Here is a 304-residue protein sequence, read N- to C-terminus: Sulfate adenylyltransferase subunit 2 (304 aa).

The protein belongs to the PAPS reductase family. CysD subfamily. Heterodimer composed of CysD, the smaller subunit, and CysN.

It catalyses the reaction sulfate + ATP + H(+) = adenosine 5'-phosphosulfate + diphosphate. It functions in the pathway sulfur metabolism; hydrogen sulfide biosynthesis; sulfite from sulfate: step 1/3. Its function is as follows. With CysN forms the ATP sulfurylase (ATPS) that catalyzes the adenylation of sulfate producing adenosine 5'-phosphosulfate (APS) and diphosphate, the first enzymatic step in sulfur assimilation pathway. APS synthesis involves the formation of a high-energy phosphoric-sulfuric acid anhydride bond driven by GTP hydrolysis by CysN coupled to ATP hydrolysis by CysD. The protein is Sulfate adenylyltransferase subunit 2 of Acinetobacter baylyi (strain ATCC 33305 / BD413 / ADP1).